Reading from the N-terminus, the 768-residue chain is Actin filament-associated protein 1-like 1 (768 aa).

A disordered region spans residues 83-145 (LRDMSDDGEP…GKSPEYISSH (63 aa)). Phosphoserine is present on residues S87, S93, S97, S103, and S153. Over residues 165–185 (SYPTTRMNGELKNSYNDSDAM) the composition is skewed to polar residues. A disordered region spans residues 165 to 211 (SYPTTRMNGELKNSYNDSDAMSSSYESYDEEEEEEKGRQPKHQWPSE). Residues 220–316 (DCRICAFLLR…WLKVIREVSR (97 aa)) enclose the PH 1 domain. 2 positions are modified to phosphoserine: S329 and S343. Positions 340-349 (KRLSQEKQNS) are enriched in basic and acidic residues. The disordered stretch occupies residues 340 to 382 (KRLSQEKQNSDSDSLGMNDSGSTLGRREACEHGKGKKNSLAEL). Residues 350-362 (DSDSLGMNDSGST) are compositionally biased toward polar residues. Residues 418–512 (EVPCCGYLNV…WLGLLLVEMG (95 aa)) form the PH 2 domain. Residue Y557 is modified to Phosphotyrosine. Positions 564 to 609 (KVQDEEPQRPTGAQVKRHASSCSEKSHRADPQVKVKRHASSANQYK) are disordered. Residues 587 to 596 (EKSHRADPQV) are compositionally biased toward basic and acidic residues. Residues 611–701 (GKNRAEEDAR…AVKERLQQSL (91 aa)) are a coiled coil. Positions 705 to 768 (PALGLSVSNK…KAKEWEMKKT (64 aa)) are disordered. Residues 710-734 (SVSNKNKSQDTTNKPQSNAPEQSLP) are compositionally biased toward polar residues. S747 carries the post-translational modification Phosphoserine. A compositionally biased stretch (basic and acidic residues) spans 759 to 768 (KAKEWEMKKT).

Interacts with CTTN.

Its subcellular location is the cytoplasm. It is found in the cell projection. The protein resides in the podosome. It localises to the invadopodium. The protein localises to the cytoskeleton. Its subcellular location is the stress fiber. May be involved in podosome and invadosome formation. The polypeptide is Actin filament-associated protein 1-like 1 (Afap1l1) (Mus musculus (Mouse)).